The following is a 283-amino-acid chain: NADPH-dependent 3-dehydrocapnine reductase (283 aa).

The active-site Proton acceptor is the Tyr153.

The protein belongs to the short-chain dehydrogenases/reductases (SDR) family.

It carries out the reaction 3-oxocapnine + NADPH + H(+) = capnine + NADP(+). It functions in the pathway lipid metabolism. Its function is as follows. Reductase involved in the biosynthesis of capnine, a sulfonolipid present in the outer membrane of gliding Bacteroidetes and essential for gliding motility. Catalyzes the reduction of 3-dehydrocapnine to capnine. This is NADPH-dependent 3-dehydrocapnine reductase from Ornithobacterium rhinotracheale.